A 315-amino-acid chain; its full sequence is Zinc metalloproteinase nas-4 (315 aa).

The signal sequence occupies residues 1–20 (MMTIQRYSLVFCAIFATCWT). Residue asparagine 71 is glycosylated (N-linked (GlcNAc...) asparagine). One can recognise a Peptidase M12A domain in the interval 95-290 (NAIKQIYRRW…RKINKLYNCP (196 aa)). 2 disulfides stabilise this stretch: cysteine 137–cysteine 289 and cysteine 160–cysteine 179. A Zn(2+)-binding site is contributed by histidine 187. The active site involves glutamate 188. Positions 191 and 197 each coordinate Zn(2+). Residues 291 to 315 (GVSGNNNNNNNNQINSNSIVNHPQV) form a disordered region.

Zn(2+) is required as a cofactor. Digestive tract. Found in the pharynx cells of the procorpus, metacorpus, isthmus and terminal bulb, and in the terminal bulb lumen.

It localises to the secreted. In terms of biological role, metalloprotease. May be involved in digestion. The protein is Zinc metalloproteinase nas-4 (nas-4) of Caenorhabditis elegans.